A 313-amino-acid chain; its full sequence is tRNA pseudouridine synthase B (313 aa).

Histidine 44 is a substrate binding site. The Nucleophile role is filled by aspartate 49. Residues tyrosine 77, tyrosine 180, and leucine 201 each coordinate substrate.

It belongs to the pseudouridine synthase TruB family. Type 1 subfamily.

The enzyme catalyses uridine(55) in tRNA = pseudouridine(55) in tRNA. Responsible for synthesis of pseudouridine from uracil-55 in the psi GC loop of transfer RNAs. This is tRNA pseudouridine synthase B from Hamiltonella defensa subsp. Acyrthosiphon pisum (strain 5AT).